The sequence spans 557 residues: Urocanate hydratase (557 aa).

Residues 53 to 54, Q131, 177 to 179, E197, R202, 243 to 244, 264 to 268, 274 to 275, and Y323 contribute to the NAD(+) site; these read GG, GMG, NA, QTSAH, and YL. Residue C411 is part of the active site. G493 lines the NAD(+) pocket.

Belongs to the urocanase family. NAD(+) serves as cofactor.

It is found in the cytoplasm. The enzyme catalyses 4-imidazolone-5-propanoate = trans-urocanate + H2O. Its pathway is amino-acid degradation; L-histidine degradation into L-glutamate; N-formimidoyl-L-glutamate from L-histidine: step 2/3. In terms of biological role, catalyzes the conversion of urocanate to 4-imidazolone-5-propionate. The polypeptide is Urocanate hydratase (Pseudomonas putida (strain GB-1)).